Consider the following 391-residue polypeptide: 1-deoxy-D-xylulose 5-phosphate reductoisomerase (391 aa).

NADPH contacts are provided by threonine 17, glycine 18, serine 19, isoleucine 20, asparagine 47, and asparagine 130. Lysine 131 is a 1-deoxy-D-xylulose 5-phosphate binding site. Glutamate 132 contributes to the NADPH binding site. Residue aspartate 156 participates in Mn(2+) binding. Residues serine 157, glutamate 158, serine 182, and histidine 205 each contribute to the 1-deoxy-D-xylulose 5-phosphate site. Position 158 (glutamate 158) interacts with Mn(2+). Glycine 211 provides a ligand contact to NADPH. Positions 218, 223, 224, and 227 each coordinate 1-deoxy-D-xylulose 5-phosphate. Residue glutamate 227 coordinates Mn(2+).

The protein belongs to the DXR family. The cofactor is Mg(2+). Mn(2+) is required as a cofactor.

The catalysed reaction is 2-C-methyl-D-erythritol 4-phosphate + NADP(+) = 1-deoxy-D-xylulose 5-phosphate + NADPH + H(+). It functions in the pathway isoprenoid biosynthesis; isopentenyl diphosphate biosynthesis via DXP pathway; isopentenyl diphosphate from 1-deoxy-D-xylulose 5-phosphate: step 1/6. In terms of biological role, catalyzes the NADPH-dependent rearrangement and reduction of 1-deoxy-D-xylulose-5-phosphate (DXP) to 2-C-methyl-D-erythritol 4-phosphate (MEP). This chain is 1-deoxy-D-xylulose 5-phosphate reductoisomerase, found in Sinorhizobium fredii (strain NBRC 101917 / NGR234).